Consider the following 155-residue polypeptide: Deoxyuridine 5'-triphosphate nucleotidohydrolase (155 aa).

Residues 72 to 74 (RSG), Asn-85, 89 to 91 (TVD), and Lys-99 contribute to the substrate site.

The protein belongs to the dUTPase family. Requires Mg(2+) as cofactor.

The enzyme catalyses dUTP + H2O = dUMP + diphosphate + H(+). It functions in the pathway pyrimidine metabolism; dUMP biosynthesis; dUMP from dCTP (dUTP route): step 2/2. Functionally, this enzyme is involved in nucleotide metabolism: it produces dUMP, the immediate precursor of thymidine nucleotides and it decreases the intracellular concentration of dUTP so that uracil cannot be incorporated into DNA. The sequence is that of Deoxyuridine 5'-triphosphate nucleotidohydrolase from Parvibaculum lavamentivorans (strain DS-1 / DSM 13023 / NCIMB 13966).